The chain runs to 510 residues: MRALLSVSDKEGIVEFGKELENLGFEILSTGGTFKLLKENGIKVIEVSDFTKSPELFEGRVKTLHPKIHGGILHKRSDENHIKQAKENEILGIDLVCVNLYPFKKTTIMSDDFDEIIENIDIGGPAMIRSAAKNYKDVMVLCDPLDYEKVIETLKKGQNDENFRLNLMIKAYEHTANYDAYIANYMNERFNGGFGASKFIVGQKVFDTKYGENPHQKGALYEFDAFFSANFKALKGEASFNNLTDINAALNLASSFDKAPAIAIVKHGNPCGFAIKENLVQSYIHALKCDSVSAYGGVVAINGTLDEALANKINEIYVEVIIAANVDEKALAVFEGKKRIKIFTQESPFLIRSFDKYDFKHIDGGFVYQNSDEVGEDELKNAKLMSQREASKEELKDLEIAMKIAAFTKSNNVVYVKNGAMVAIGMGMTSRIDAAKAAIAKAKEMGLDLQGCVLASEAFFPFRDSIDEASKVGVKAIVEPGGSIRDDEVVKAADEYGMALYFTGVRHFLH.

The region spanning 1-142 (MRALLSVSDK…KNYKDVMVLC (142 aa)) is the MGS-like domain.

This sequence belongs to the PurH family.

The enzyme catalyses (6R)-10-formyltetrahydrofolate + 5-amino-1-(5-phospho-beta-D-ribosyl)imidazole-4-carboxamide = 5-formamido-1-(5-phospho-D-ribosyl)imidazole-4-carboxamide + (6S)-5,6,7,8-tetrahydrofolate. It carries out the reaction IMP + H2O = 5-formamido-1-(5-phospho-D-ribosyl)imidazole-4-carboxamide. Its pathway is purine metabolism; IMP biosynthesis via de novo pathway; 5-formamido-1-(5-phospho-D-ribosyl)imidazole-4-carboxamide from 5-amino-1-(5-phospho-D-ribosyl)imidazole-4-carboxamide (10-formyl THF route): step 1/1. The protein operates within purine metabolism; IMP biosynthesis via de novo pathway; IMP from 5-formamido-1-(5-phospho-D-ribosyl)imidazole-4-carboxamide: step 1/1. This chain is Bifunctional purine biosynthesis protein PurH, found in Campylobacter jejuni subsp. jejuni serotype O:2 (strain ATCC 700819 / NCTC 11168).